The sequence spans 198 residues: NAD(P)H-quinone oxidoreductase chain 6 (198 aa).

The next 5 helical transmembrane spans lie at 9-29, 32-52, 61-81, 100-120, and 145-165; these read YISF…VVLL, IVYS…IYIL, AQVL…IMLV, TALV…ITPW, and LLPF…AIIL.

This sequence belongs to the complex I subunit 6 family.

It localises to the membrane. The catalysed reaction is a plastoquinone + NADH + (n+1) H(+)(in) = a plastoquinol + NAD(+) + n H(+)(out). The enzyme catalyses a plastoquinone + NADPH + (n+1) H(+)(in) = a plastoquinol + NADP(+) + n H(+)(out). Functionally, NDH-1 shuttles electrons from NAD(P)H, via FMN and iron-sulfur (Fe-S) centers, to quinones in the respiratory chain. The immediate electron acceptor for the enzyme in this species is believed to be plastoquinone. Couples the redox reaction to proton translocation (for every two electrons transferred, four hydrogen ions are translocated across the cytoplasmic membrane), and thus conserves the redox energy in a proton gradient. This chain is NAD(P)H-quinone oxidoreductase chain 6 (ndhG), found in Synechocystis sp. (strain ATCC 27184 / PCC 6803 / Kazusa).